A 104-amino-acid chain; its full sequence is N(2)-fixation sustaining protein CowN (104 aa).

This sequence belongs to the CowN family.

In terms of biological role, is required to sustain N(2)-dependent growth in the presence of low levels of carbon monoxide (CO). Probably acts by protecting the N(2) fixation ability of the nitrogenase complex, which is inactivated in the presence of CO. In Arcobacter nitrofigilis (strain ATCC 33309 / DSM 7299 / CCUG 15893 / LMG 7604 / NCTC 12251 / CI) (Campylobacter nitrofigilis), this protein is N(2)-fixation sustaining protein CowN.